The following is a 735-amino-acid chain: 1,4-alpha-glucan branching enzyme GlgB 1 (735 aa).

Asp-418 (nucleophile) is an active-site residue. Glu-471 functions as the Proton donor in the catalytic mechanism.

This sequence belongs to the glycosyl hydrolase 13 family. GlgB subfamily. Monomer.

The enzyme catalyses Transfers a segment of a (1-&gt;4)-alpha-D-glucan chain to a primary hydroxy group in a similar glucan chain.. It functions in the pathway glycan biosynthesis; glycogen biosynthesis. In terms of biological role, catalyzes the formation of the alpha-1,6-glucosidic linkages in glycogen by scission of a 1,4-alpha-linked oligosaccharide from growing alpha-1,4-glucan chains and the subsequent attachment of the oligosaccharide to the alpha-1,6 position. This is 1,4-alpha-glucan branching enzyme GlgB 1 from Rhizobium johnstonii (strain DSM 114642 / LMG 32736 / 3841) (Rhizobium leguminosarum bv. viciae).